Consider the following 367-residue polypeptide: Glutamate 5-kinase (367 aa).

Lysine 10 is a binding site for ATP. Positions 50, 137, and 149 each coordinate substrate. Residues 169–170 (TD) and 211–217 (TGGMATK) each bind ATP. One can recognise a PUA domain in the interval 275 to 353 (AGELVVDDGA…QQIGEILGYE (79 aa)).

The protein belongs to the glutamate 5-kinase family.

The protein localises to the cytoplasm. The enzyme catalyses L-glutamate + ATP = L-glutamyl 5-phosphate + ADP. The protein operates within amino-acid biosynthesis; L-proline biosynthesis; L-glutamate 5-semialdehyde from L-glutamate: step 1/2. Its function is as follows. Catalyzes the transfer of a phosphate group to glutamate to form L-glutamate 5-phosphate. This is Glutamate 5-kinase from Erwinia tasmaniensis (strain DSM 17950 / CFBP 7177 / CIP 109463 / NCPPB 4357 / Et1/99).